The chain runs to 369 residues: Erythronate-4-phosphate dehydrogenase (369 aa).

Substrate is bound by residues Ser45 and Thr66. Asp146 lines the NAD(+) pocket. Arg209 is an active-site residue. Position 233 (Asp233) interacts with NAD(+). The active site involves Glu238. The active-site Proton donor is the His255. Position 258 (Gly258) interacts with NAD(+).

The protein belongs to the D-isomer specific 2-hydroxyacid dehydrogenase family. PdxB subfamily. As to quaternary structure, homodimer.

Its subcellular location is the cytoplasm. It carries out the reaction 4-phospho-D-erythronate + NAD(+) = (R)-3-hydroxy-2-oxo-4-phosphooxybutanoate + NADH + H(+). Its pathway is cofactor biosynthesis; pyridoxine 5'-phosphate biosynthesis; pyridoxine 5'-phosphate from D-erythrose 4-phosphate: step 2/5. In terms of biological role, catalyzes the oxidation of erythronate-4-phosphate to 3-hydroxy-2-oxo-4-phosphonooxybutanoate. The chain is Erythronate-4-phosphate dehydrogenase from Porphyromonas gingivalis (strain ATCC BAA-308 / W83).